The primary structure comprises 699 residues: eEF1A lysine and N-terminal methyltransferase (699 aa).

Methionine 1 is modified (N-acetylmethionine). A Phosphoserine modification is found at serine 267. A disordered region spans residues 433-460; it reads VSHRAQKKRKKDRKKHRPADTPEDLPAA. The segment covering 436–449 has biased composition (basic residues); it reads RAQKKRKKDRKKHR.

Belongs to the methyltransferase superfamily. As to quaternary structure, forms a tripartite complex containing GAB1, METTL13 and SPRY2. Within the complex interacts with GAB1 and SPRY2.

It is found in the cytoplasm. Its subcellular location is the nucleus. The protein localises to the mitochondrion. The catalysed reaction is L-lysyl-[protein] + S-adenosyl-L-methionine = N(6)-methyl-L-lysyl-[protein] + S-adenosyl-L-homocysteine + H(+). It catalyses the reaction N(6)-methyl-L-lysyl-[protein] + S-adenosyl-L-methionine = N(6),N(6)-dimethyl-L-lysyl-[protein] + S-adenosyl-L-homocysteine + H(+). The enzyme catalyses N-terminal glycyl-L-lysyl-L-glutamyl-[protein] + 3 S-adenosyl-L-methionine = N-terminal N,N,N-trimethyl-glycyl-L-lysyl-L-glutamyl-[protein] + 3 S-adenosyl-L-homocysteine + 3 H(+). Dual methyltransferase that catalyzes methylation of elongation factor 1-alpha (EEF1A1 and EEF1A2) at two different positions, and is therefore involved in the regulation of mRNA translation. Via its C-terminus, methylates EEF1A1 and EEF1A2 at the N-terminal residue 'Gly-2'. Via its N-terminus dimethylates EEF1A1 and EEF1A2 at residue 'Lys-55'. Has no activity towards core histones H2A, H2B, H3 and H4. This is eEF1A lysine and N-terminal methyltransferase (METTL13) from Bos taurus (Bovine).